Here is a 140-residue protein sequence, read N- to C-terminus: Cysteine desulfuration protein SufE (140 aa).

Cysteine 51 (cysteine persulfide intermediate) is an active-site residue.

Belongs to the SufE family. Homodimer. Interacts with SufS.

It localises to the cytoplasm. It participates in cofactor biosynthesis; iron-sulfur cluster biosynthesis. Functionally, participates in cysteine desulfuration mediated by SufS. Cysteine desulfuration mobilizes sulfur from L-cysteine to yield L-alanine and constitutes an essential step in sulfur metabolism for biosynthesis of a variety of sulfur-containing biomolecules. Functions as a sulfur acceptor for SufS, by mediating the direct transfer of the sulfur atom from the S-sulfanylcysteine of SufS, an intermediate product of cysteine desulfuration process. The polypeptide is Cysteine desulfuration protein SufE (Yersinia enterocolitica serotype O:8 / biotype 1B (strain NCTC 13174 / 8081)).